We begin with the raw amino-acid sequence, 288 residues long: Shikimate dehydrogenase (NADP(+)) (288 aa).

Residues 22-24 and Thr-69 contribute to the shikimate site; that span reads SLS. The Proton acceptor role is filled by Lys-73. Positions 94 and 110 each coordinate shikimate. NADP(+) contacts are provided by residues 131–135 and Leu-228; that span reads GSGGA. Tyr-230 is a binding site for shikimate. Residue Gly-251 coordinates NADP(+).

It belongs to the shikimate dehydrogenase family. Homodimer.

The catalysed reaction is shikimate + NADP(+) = 3-dehydroshikimate + NADPH + H(+). The protein operates within metabolic intermediate biosynthesis; chorismate biosynthesis; chorismate from D-erythrose 4-phosphate and phosphoenolpyruvate: step 4/7. Functionally, involved in the biosynthesis of the chorismate, which leads to the biosynthesis of aromatic amino acids. Catalyzes the reversible NADPH linked reduction of 3-dehydroshikimate (DHSA) to yield shikimate (SA). This Synechococcus sp. (strain JA-2-3B'a(2-13)) (Cyanobacteria bacterium Yellowstone B-Prime) protein is Shikimate dehydrogenase (NADP(+)).